The following is a 293-amino-acid chain: Transcription initiation factor IIB 2 (293 aa).

The TFIIB-type zinc finger occupies 1–31 (MKCPYCKTDNAITYDVEKGMYVCTNCASVIE). Zn(2+) contacts are provided by Cys3, Cys6, Cys23, and Cys26. 2 consecutive repeat copies span residues 107–193 (SILN…ANSI) and 204–285 (EYIP…DIVD).

The protein belongs to the TFIIB family.

Its function is as follows. Stabilizes TBP binding to an archaeal box-A promoter. Also responsible for recruiting RNA polymerase II to the pre-initiation complex (DNA-TBP-TFIIB). The sequence is that of Transcription initiation factor IIB 2 from Saccharolobus solfataricus (strain ATCC 35092 / DSM 1617 / JCM 11322 / P2) (Sulfolobus solfataricus).